A 65-amino-acid chain; its full sequence is UPF0434 protein VFMJ11_A0475 (65 aa).

Belongs to the UPF0434 family.

This is UPF0434 protein VFMJ11_A0475 from Aliivibrio fischeri (strain MJ11) (Vibrio fischeri).